A 364-amino-acid polypeptide reads, in one-letter code: O-methyltransferase ZRP4 (364 aa).

Gly-208, Asp-231, Asp-251, Met-252, and Lys-265 together coordinate S-adenosyl-L-methionine. His-269 acts as the Proton acceptor in catalysis.

It belongs to the class I-like SAM-binding methyltransferase superfamily. Cation-independent O-methyltransferase family. COMT subfamily. Homodimer. Accumulates preferentially in the roots and is located predominantly in the region of the endodermis, low levels are seen in the leaves, stems and other shoot organs.

Functionally, may be involved in the O-methylation of suberin phenylpropanoid precursors. The chain is O-methyltransferase ZRP4 (ZRP4) from Zea mays (Maize).